The primary structure comprises 211 residues: MAVVPLLLLGGLWSAVGASSLGVVTCGSVVKLLNTRHNVRLHSHDVRYGSGSGQQSVTGVTSVDDSNSYWRIRGKSATVCERGTPIKCGQPIRLTHVNTGRNLHSHHFTSPLSGNQEVSAFGEEGEGDYLDDWTVLCNGPYWVRDGEVRFKHSSTEVLLSVTGEQYGRPISGQKEVHGMAQPSQNNYWKAMEGIFMKPSELLKAEAHHAEL.

The first 18 residues, 1 to 18 (MAVVPLLLLGGLWSAVGA), serve as a signal peptide directing secretion. MIR domains follow at residues 21–75 (LGVV…IRGK), 83–138 (GTPI…VLCN), and 139–193 (GPYW…AMEG).

Its subcellular location is the secreted. This chain is Stromal cell-derived factor 2 (SDF2), found in Homo sapiens (Human).